A 250-amino-acid chain; its full sequence is ATP synthase subunit a (250 aa).

6 consecutive transmembrane segments (helical) span residues 25-45, 84-104, 115-135, 141-161, 187-209, and 223-243; these read VSFTNSAAFMVGIVALIFFFL, VFFPLVFSLFVFVFVANVIGL, IVVTAALALLVIGTVVIYGFY, FLHLFVPSGVPAFLLPFIVLI, ALKVFAFFVVGLGSAGFLGWLGA, and ELLVAILQAYVFAVLTSIYLN.

The protein belongs to the ATPase A chain family. F-type ATPases have 2 components, CF(1) - the catalytic core - and CF(0) - the membrane proton channel. CF(1) has five subunits: alpha(3), beta(3), gamma(1), delta(1), epsilon(1). CF(0) has three main subunits: a(1), b(2) and c(9-12). The alpha and beta chains form an alternating ring which encloses part of the gamma chain. CF(1) is attached to CF(0) by a central stalk formed by the gamma and epsilon chains, while a peripheral stalk is formed by the delta and b chains.

It is found in the cell inner membrane. Key component of the proton channel; it plays a direct role in the translocation of protons across the membrane. In Azorhizobium caulinodans (strain ATCC 43989 / DSM 5975 / JCM 20966 / LMG 6465 / NBRC 14845 / NCIMB 13405 / ORS 571), this protein is ATP synthase subunit a.